Here is a 3421-residue protein sequence, read N- to C-terminus: Large tegument protein deneddylase (3421 aa).

A deubiquitination activity region spans residues 1–248 (MAQTLVPANK…SETYLSDEQY (248 aa)). The Peptidase C76 domain occupies 19-238 (VVIGYRNQYD…ISATSLLYGI (220 aa)). Residues Cys-39, Asp-172, and His-174 contribute to the active site. Residues 311-351 (QPTEKRVSLPKRRRPPWTPPTSSENLTTSGNTHTVAGRPSQ) are disordered. Residues 332-344 (SSENLTTSGNTHT) are compositionally biased toward polar residues. Residues 482-508 (LEQFITMIFNRLLSFLVENGARTRTDS) are interaction with inner tegument protein. Disordered stretches follow at residues 2407-2442 (ESNP…PTGI) and 2479-3195 (SNAM…RKNI). The segment covering 2415–2432 (SHDSSQSLDVPSSPSSGS) has biased composition (low complexity). Pro residues-rich tracts occupy residues 2506–2516 (TLPPKAAPLPP), 2541–2556 (PSVP…PPLP), 2565–2577 (GPPP…PPLP), 2586–2598 (GPPP…PPLP), and 2607–2619 (GPPP…PPLP). Polar residues-rich tracts occupy residues 2620 to 2637 (QSTS…SGKT) and 2778 to 2787 (SDSNVTQSTK). The span at 2797 to 2857 (PAAAPAKSAA…SAAAPAAAPA (61 aa)) shows a compositional bias: low complexity. A compositionally biased stretch (basic and acidic residues) spans 2869-2895 (KPAKDQAKDQAKDQAKDQAKDQAKDQA). Polar residues predominate over residues 2953-2969 (LSASKNSHTTDAVSSDR). Basic and acidic residues-rich tracts occupy residues 3023–3040 (RKSD…RRAF) and 3088–3097 (CSEEPKRPTG). Polar residues predominate over residues 3120 to 3146 (IPQNQNTSESPRTTSLKSPTRTVQSSM). A compositionally biased stretch (pro residues) spans 3171-3188 (PQPPPANQTPPPQEPPAP).

Belongs to the herpesviridae large tegument protein family. In terms of assembly, interacts with host CUL1 and CUL4A; these interactions inhibit the E3 ligase activity of cullins. Interacts with inner tegument protein. Interacts with capsid vertex specific component CVC2. Interacts with the major capsid protein/MCP.

It localises to the virion tegument. It is found in the host cytoplasm. The protein localises to the host nucleus. The enzyme catalyses Thiol-dependent hydrolysis of ester, thioester, amide, peptide and isopeptide bonds formed by the C-terminal Gly of ubiquitin (a 76-residue protein attached to proteins as an intracellular targeting signal).. Its function is as follows. Large tegument protein that plays multiple roles in the viral cycle. During viral entry, remains associated with the capsid while most of the tegument is detached and participates in the capsid transport toward the host nucleus. Plays a role in the routing of the capsid at the nuclear pore complex and subsequent uncoating. Within the host nucleus, acts as a deneddylase and promotes the degradation of nuclear CRLs (cullin-RING ubiquitin ligases) and thereby stabilizes nuclear CRL substrates, while cytoplasmic CRLs remain unaffected. These modifications prevent host cell cycle S-phase progression and create a favorable environment allowing efficient viral genome replication. Participates later in the secondary envelopment of capsids. Indeed, plays a linker role for the association of the outer viral tegument to the capsids together with the inner tegument protein. The chain is Large tegument protein deneddylase from Equus caballus (Horse).